The sequence spans 217 residues: Thiamine-phosphate synthase (217 aa).

Residues 42–46 (QYRDK) and Asp77 each bind 4-amino-2-methyl-5-(diphosphooxymethyl)pyrimidine. Mg(2+)-binding residues include Asp78 and Asp97. Ser116 provides a ligand contact to 4-amino-2-methyl-5-(diphosphooxymethyl)pyrimidine. Residue 143–145 (TTS) coordinates 2-[(2R,5Z)-2-carboxy-4-methylthiazol-5(2H)-ylidene]ethyl phosphate. 4-amino-2-methyl-5-(diphosphooxymethyl)pyrimidine is bound at residue Lys146. Residues Gly174 and 194 to 195 (IS) contribute to the 2-[(2R,5Z)-2-carboxy-4-methylthiazol-5(2H)-ylidene]ethyl phosphate site.

The protein belongs to the thiamine-phosphate synthase family. The cofactor is Mg(2+).

The catalysed reaction is 2-[(2R,5Z)-2-carboxy-4-methylthiazol-5(2H)-ylidene]ethyl phosphate + 4-amino-2-methyl-5-(diphosphooxymethyl)pyrimidine + 2 H(+) = thiamine phosphate + CO2 + diphosphate. It carries out the reaction 2-(2-carboxy-4-methylthiazol-5-yl)ethyl phosphate + 4-amino-2-methyl-5-(diphosphooxymethyl)pyrimidine + 2 H(+) = thiamine phosphate + CO2 + diphosphate. The enzyme catalyses 4-methyl-5-(2-phosphooxyethyl)-thiazole + 4-amino-2-methyl-5-(diphosphooxymethyl)pyrimidine + H(+) = thiamine phosphate + diphosphate. It participates in cofactor biosynthesis; thiamine diphosphate biosynthesis; thiamine phosphate from 4-amino-2-methyl-5-diphosphomethylpyrimidine and 4-methyl-5-(2-phosphoethyl)-thiazole: step 1/1. In terms of biological role, condenses 4-methyl-5-(beta-hydroxyethyl)thiazole monophosphate (THZ-P) and 2-methyl-4-amino-5-hydroxymethyl pyrimidine pyrophosphate (HMP-PP) to form thiamine monophosphate (TMP). The chain is Thiamine-phosphate synthase from Lactiplantibacillus plantarum (strain ATCC BAA-793 / NCIMB 8826 / WCFS1) (Lactobacillus plantarum).